The primary structure comprises 266 residues: Signal peptidase I (266 aa).

Residues 1 to 20 (MQTDNTKSNTNKTAKQEWGS) are Cytoplasmic-facing. The helical transmembrane segment at 21 to 41 (FAFVICIALLIRILIMEPFTV) threads the bilayer. The Periplasmic portion of the chain corresponds to 42-266 (PTGSMKATIL…IFRNLYSTDE (225 aa)). Active-site residues include S45 and K108.

Belongs to the peptidase S26 family.

Its subcellular location is the cell inner membrane. The catalysed reaction is Cleavage of hydrophobic, N-terminal signal or leader sequences from secreted and periplasmic proteins.. This Rickettsia felis (strain ATCC VR-1525 / URRWXCal2) (Rickettsia azadi) protein is Signal peptidase I (lepB).